A 143-amino-acid polypeptide reads, in one-letter code: Hemoglobin subunit alpha-2 (143 aa).

Residue serine 2 is modified to N-acetylserine. The Globin domain maps to 2–143; sequence SLSSKQKATV…LALALAEKYR (142 aa). Histidine 60 contributes to the O2 binding site. Histidine 89 serves as a coordination point for heme b.

Belongs to the globin family. In terms of assembly, hb 2 is a heterotetramer of two alpha-2 and two beta-2 chains. As to expression, red blood cells.

In terms of biological role, involved in oxygen transport from gills to the various peripheral tissues. The chain is Hemoglobin subunit alpha-2 (hba2) from Gadus morhua (Atlantic cod).